Here is a 507-residue protein sequence, read N- to C-terminus: Histidine ammonia-lyase (507 aa).

The 5-imidazolinone (Ala-Gly) cross-link spans 143–145 (ASG). Ser144 bears the 2,3-didehydroalanine (Ser) mark.

It belongs to the PAL/histidase family. Post-translationally, contains an active site 4-methylidene-imidazol-5-one (MIO), which is formed autocatalytically by cyclization and dehydration of residues Ala-Ser-Gly.

It is found in the cytoplasm. The enzyme catalyses L-histidine = trans-urocanate + NH4(+). It participates in amino-acid degradation; L-histidine degradation into L-glutamate; N-formimidoyl-L-glutamate from L-histidine: step 1/3. The chain is Histidine ammonia-lyase from Alkaliphilus oremlandii (strain OhILAs) (Clostridium oremlandii (strain OhILAs)).